Here is a 302-residue protein sequence, read N- to C-terminus: Sulfate adenylyltransferase subunit 2 (302 aa).

This sequence belongs to the PAPS reductase family. CysD subfamily. In terms of assembly, heterodimer composed of CysD, the smaller subunit, and CysN.

It catalyses the reaction sulfate + ATP + H(+) = adenosine 5'-phosphosulfate + diphosphate. The protein operates within sulfur metabolism; hydrogen sulfide biosynthesis; sulfite from sulfate: step 1/3. With CysN forms the ATP sulfurylase (ATPS) that catalyzes the adenylation of sulfate producing adenosine 5'-phosphosulfate (APS) and diphosphate, the first enzymatic step in sulfur assimilation pathway. APS synthesis involves the formation of a high-energy phosphoric-sulfuric acid anhydride bond driven by GTP hydrolysis by CysN coupled to ATP hydrolysis by CysD. The chain is Sulfate adenylyltransferase subunit 2 from Erwinia tasmaniensis (strain DSM 17950 / CFBP 7177 / CIP 109463 / NCPPB 4357 / Et1/99).